Here is a 952-residue protein sequence, read N- to C-terminus: MFKFFSGFGDSNEKEIRALEPLVDKINQLESSFSALSDEALKAKTAEFKERLKETFETTASAILKDIAGTTAELEEAQKTADNSKQSRLKAKLESLNKDLSVKENAALNAILPEAFAAVREASRRTIGLRHYDVQLIGGMVLHHGKIAEMRTGEGKTLVATLPLYLNSLLGKGVHLVTVNDYLARRDAYWMGPVYHALGVSVSSIYPMQTPTEELPSRLFDPTYTSETPNDPWMHFRPISRQEAYKADITYGTSTEFGFDYLRDNLRPDLAQCVQREMNYAIVDEIDNLLIDEARTPLIISAPDTEAGKLYEVFARLAPRLAAGKDYEINEKDRNAELTEDGWANVEKLLSREGVMKGSSLYDPQNAPLIRHLRNALSAKEFYKKDHQYVVKENEVIIIDEFTGRMMLGRRYSEGLHQAIEAKEHVKIQQESKTYATVTIQNLFRMYRKLCGMTGTAATEAEEFSKIYKLEVVIIPTNKPAIREDYGDQIYKDQSAKFKAVVNEINEMRNLGRPVLVGTVSIENSEMLSNMLKRQGIEHKVLNAKQHEKEAQVVAEAGKPGAVTVATNMAGRGVDILLGGKEPPKDDDKAYSQWQVHHQQVLEAGGLHVIGTERHESRRIDNQLRGRSGRQGDPGSSRFYVALDDDIMRRFGSERIQGIMEWAGMDENTPIENGLVSRTLENAQKRVEGYHFDVRKHLVEYDDVVNKHREVIYAERRKILLGADLKSNILDMIREEIMTQTAEHTQGYDSSEWNLEGLVTHIGGIFALPAEINAEALAKLSQEEITELLTRTAEELYQKKEAEIGAGSMRLLERIIMLHTLDSLWVEHLTIMENLRREIGLQAFAQRDPLIAYKNEGHVRFQELLETIKHDVVHNIYRVNIQIQHQTESATAKAASRPVQQQKPLPAAPAAAIPGVSAKAATQPAAPAAKEVGRNDPCPCGSGKKYKKCCGK.

ATP-binding positions include glutamine 135, 153–157 (GEGKT), and aspartate 575. Positions 916 to 930 (VSAKAATQPAAPAAK) are enriched in low complexity. The segment at 916–952 (VSAKAATQPAAPAAKEVGRNDPCPCGSGKKYKKCCGK) is disordered. 4 residues coordinate Zn(2+): cysteine 938, cysteine 940, cysteine 949, and cysteine 950.

Belongs to the SecA family. As to quaternary structure, monomer and homodimer. Part of the essential Sec protein translocation apparatus which comprises SecA, SecYEG and auxiliary proteins SecDF. Other proteins may also be involved. Zn(2+) is required as a cofactor.

The protein resides in the cell membrane. It is found in the cytoplasm. The enzyme catalyses ATP + H2O + cellular proteinSide 1 = ADP + phosphate + cellular proteinSide 2.. Its function is as follows. Part of the Sec protein translocase complex. Interacts with the SecYEG preprotein conducting channel. Has a central role in coupling the hydrolysis of ATP to the transfer of proteins into and across the cell membrane, serving as an ATP-driven molecular motor driving the stepwise translocation of polypeptide chains across the membrane. The protein is Protein translocase subunit SecA of Dehalococcoides mccartyi (strain ATCC BAA-2266 / KCTC 15142 / 195) (Dehalococcoides ethenogenes (strain 195)).